Reading from the N-terminus, the 1371-residue chain is DNA-directed RNA polymerase subunit beta (1371 aa).

The protein belongs to the RNA polymerase beta chain family. The RNAP catalytic core consists of 2 alpha, 1 beta, 1 beta' and 1 omega subunit. When a sigma factor is associated with the core the holoenzyme is formed, which can initiate transcription.

It carries out the reaction RNA(n) + a ribonucleoside 5'-triphosphate = RNA(n+1) + diphosphate. DNA-dependent RNA polymerase catalyzes the transcription of DNA into RNA using the four ribonucleoside triphosphates as substrates. This chain is DNA-directed RNA polymerase subunit beta, found in Citrifermentans bemidjiense (strain ATCC BAA-1014 / DSM 16622 / JCM 12645 / Bem) (Geobacter bemidjiensis).